Consider the following 66-residue polypeptide: ATP synthase F(0) complex subunit 8 (66 aa).

The chain crosses the membrane as a helical span at residues 8–24; sequence IWLLAVVIVLTTLMIFL. The residue at position 54 (Lys54) is an N6-acetyllysine; alternate. N6-succinyllysine; alternate is present on Lys54. Position 57 is an N6-acetyllysine (Lys57).

This sequence belongs to the ATPase protein 8 family. Component of the ATP synthase complex composed at least of ATP5F1A/subunit alpha, ATP5F1B/subunit beta, ATP5MC1/subunit c (homooctomer), MT-ATP6/subunit a, MT-ATP8/subunit 8, ATP5ME/subunit e, ATP5MF/subunit f, ATP5MG/subunit g, ATP5MK/subunit k, ATP5MJ/subunit j, ATP5F1C/subunit gamma, ATP5F1D/subunit delta, ATP5F1E/subunit epsilon, ATP5PF/subunit F6, ATP5PB/subunit b, ATP5PD/subunit d, ATP5PO/subunit OSCP. ATP synthase complex consists of a soluble F(1) head domain (subunits alpha(3) and beta(3)) - the catalytic core - and a membrane F(0) domain - the membrane proton channel (subunits c, a, 8, e, f, g, k and j). These two domains are linked by a central stalk (subunits gamma, delta, and epsilon) rotating inside the F1 region and a stationary peripheral stalk (subunits F6, b, d, and OSCP). Interacts with PRICKLE3.

The protein resides in the mitochondrion membrane. Its function is as follows. Subunit 8, of the mitochondrial membrane ATP synthase complex (F(1)F(0) ATP synthase or Complex V) that produces ATP from ADP in the presence of a proton gradient across the membrane which is generated by electron transport complexes of the respiratory chain. ATP synthase complex consist of a soluble F(1) head domain - the catalytic core - and a membrane F(1) domain - the membrane proton channel. These two domains are linked by a central stalk rotating inside the F(1) region and a stationary peripheral stalk. During catalysis, ATP synthesis in the catalytic domain of F(1) is coupled via a rotary mechanism of the central stalk subunits to proton translocation. In vivo, can only synthesize ATP although its ATP hydrolase activity can be activated artificially in vitro. Part of the complex F(0) domain. The sequence is that of ATP synthase F(0) complex subunit 8 from Loxodonta africana (African elephant).